Reading from the N-terminus, the 119-residue chain is Probable non-functional T cell receptor gamma variable 11 (119 aa).

Residues 1-18 (MPLVVAVIFFSLWVFALG) form the signal peptide. Residues 23-119 (PEISISRPAN…VYHCACWIRH (97 aa)) enclose the Ig-like domain. N-linked (GlcNAc...) asparagine glycosylation is present at Asn-32.

In terms of assembly, most probably, the gamma-delta TR is not assembled due to incorrect folding of the gamma chain. Gamma-delta TR is a heterodimer composed of a gamma and delta chain; disulfide-linked. The gamma-delta TR is associated with the transmembrane signaling CD3 coreceptor proteins following the stoichiometry: a single gamma-delta TR heterodimer associates with one CD3D-CD3E heterodimer, one CD3G-CD3E heterodimer and one CD247 homodimer forming a stable octameric structure. Upon activation, gamma-delta TR complex associates with FCER1G to initiate intracellular signaling.

Its subcellular location is the cell membrane. Its function is as follows. Probable non-functional open reading frame (ORF) of V region of the variable domain of T cell receptor (TR) gamma chain. Non-functional ORF generally cannot participate in the synthesis of a productive T cell receptor (TR) chain due to altered V-(D)-J or switch recombination and/or splicing site (at mRNA level) and/or conserved amino acid change (protein level). Gamma-delta TRs recognize a variety of self and foreign non-peptide antigens frequently expressed at the epithelial boundaries between the host and external environment, including endogenous lipids presented by MH-like protein CD1D and phosphoantigens presented by butyrophilin-like molecule BTN3A1. Upon antigen recognition induces rapid, innate-like immune responses involved in pathogen clearance and tissue repair. Binding of gamma-delta TR complex to antigen triggers phosphorylation of immunoreceptor tyrosine-based activation motifs (ITAMs) in the CD3 chains by the LCK and FYN kinases, allowing the recruitment, phosphorylation, and activation of ZAP70 that facilitates phosphorylation of the scaffolding proteins LCP2 and LAT. This lead to the formation of a supramolecular signalosome that recruits the phospholipase PLCG1, resulting in calcium mobilization and ERK activation, ultimately leading to T cell expansion and differentiation into effector cells. Gamma-delta TRs are produced through somatic rearrangement of a limited repertoire of variable (V), diversity (D), and joining (J) genes. The potential diversity of gamma-delta TRs is conferred by the unique ability to rearrange (D) genes in tandem and to utilize all three reading frames. The combinatorial diversity is considerably increased by the sequence exonuclease trimming and random nucleotide (N) region additions which occur during the V-(D)-J rearrangements. In Homo sapiens (Human), this protein is Probable non-functional T cell receptor gamma variable 11.